Reading from the N-terminus, the 189-residue chain is Xanthine phosphoribosyltransferase (189 aa).

Xanthine-binding residues include L20 and N27. Residue 128–132 (ANGQA) participates in 5-phospho-alpha-D-ribose 1-diphosphate binding. Residue K156 participates in xanthine binding.

The protein belongs to the purine/pyrimidine phosphoribosyltransferase family. Xpt subfamily. As to quaternary structure, homodimer.

It localises to the cytoplasm. It catalyses the reaction XMP + diphosphate = xanthine + 5-phospho-alpha-D-ribose 1-diphosphate. Its pathway is purine metabolism; XMP biosynthesis via salvage pathway; XMP from xanthine: step 1/1. Converts the preformed base xanthine, a product of nucleic acid breakdown, to xanthosine 5'-monophosphate (XMP), so it can be reused for RNA or DNA synthesis. The polypeptide is Xanthine phosphoribosyltransferase (Leuconostoc mesenteroides subsp. mesenteroides (strain ATCC 8293 / DSM 20343 / BCRC 11652 / CCM 1803 / JCM 6124 / NCDO 523 / NBRC 100496 / NCIMB 8023 / NCTC 12954 / NRRL B-1118 / 37Y)).